The following is a 279-amino-acid chain: uncharacterized protein (279 aa).

The next 3 helical transmembrane spans lie at 31–51, 67–87, and 115–135; these read GYIA…FHAT, LLSI…AKII, and EITG…SLAL.

It belongs to the transketolase family. Thiamine diphosphate is required as a cofactor.

The protein localises to the cell membrane. This is an uncharacterized protein from Sinorhizobium fredii (strain NBRC 101917 / NGR234).